The primary structure comprises 224 residues: Zinc finger C4H2 domain-containing protein (224 aa).

Positions 11–104 form a coiled coil; the sequence is LESIKEIRNK…RRLHDEYKPL (94 aa). The C4H2-type zinc finger occupies 189-206; that stretch reads CLSCHQQIHRNAPICPLC.

As to expression, expressed in fetal tissues, including in brain, intestine, lung, kidney and muscle. Isoform 1 is expressed in numerous fetal brain regions. Isoform 3 is highly expressed in numerous fetal brain regions and spinal cord.

It localises to the cytoplasm. The protein resides in the nucleus. It is found in the postsynaptic cell membrane. Its function is as follows. Plays a role in interneurons differentiation. Involved in neuronal development and in neuromuscular junction formation. The protein is Zinc finger C4H2 domain-containing protein (ZC4H2) of Homo sapiens (Human).